Here is a 350-residue protein sequence, read N- to C-terminus: Probable galactose-1-phosphate uridylyltransferase (350 aa).

Residues 31–52 (PWSGQQEKAQKNELPEFDPTNP) form a disordered region. Residue C54 participates in Zn(2+) binding. UDP-alpha-D-glucose contacts are provided by residues 76–77 (ND) and N152. H163 provides a ligand contact to Zn(2+). The Tele-UMP-histidine intermediate role is filled by H165. UDP-alpha-D-glucose contacts are provided by residues Q167, 314–317 (KFMV), and 319–320 (FE).

This sequence belongs to the galactose-1-phosphate uridylyltransferase type 1 family. As to quaternary structure, homodimer. Zn(2+) is required as a cofactor.

It carries out the reaction alpha-D-galactose 1-phosphate + UDP-alpha-D-glucose = alpha-D-glucose 1-phosphate + UDP-alpha-D-galactose. It participates in carbohydrate metabolism; galactose metabolism. In Drosophila melanogaster (Fruit fly), this protein is Probable galactose-1-phosphate uridylyltransferase (Galt).